Reading from the N-terminus, the 114-residue chain is MAKKGGFPGMGGVNMNNMMKQVQKMQKQMEETQAQLEQKVLETSAGGGAVSIKITGKKEIVGISIKPEVVDPDDVEMLEDLIMAAMNEAIRAADDMMSSEMGKITGKMNMPGLF.

The protein belongs to the YbaB/EbfC family. As to quaternary structure, homodimer.

The protein resides in the cytoplasm. It is found in the nucleoid. In terms of biological role, binds to DNA and alters its conformation. May be involved in regulation of gene expression, nucleoid organization and DNA protection. This chain is Nucleoid-associated protein Clos_2855, found in Alkaliphilus oremlandii (strain OhILAs) (Clostridium oremlandii (strain OhILAs)).